A 1103-amino-acid polypeptide reads, in one-letter code: Isoleucine--tRNA ligase (1103 aa).

Residues 1 to 25 (MSENVYPKANEGGETAHVAPNPSFP) are disordered. A 'HIGH' region motif is present at residues 65–75 (PFANGLPHYGH). The 'KMSKS' region signature appears at 649–653 (KMSKH). An ATP-binding site is contributed by lysine 652.

Belongs to the class-I aminoacyl-tRNA synthetase family. IleS type 2 subfamily. As to quaternary structure, monomer. Zn(2+) is required as a cofactor.

It is found in the cytoplasm. It carries out the reaction tRNA(Ile) + L-isoleucine + ATP = L-isoleucyl-tRNA(Ile) + AMP + diphosphate. Functionally, catalyzes the attachment of isoleucine to tRNA(Ile). As IleRS can inadvertently accommodate and process structurally similar amino acids such as valine, to avoid such errors it has two additional distinct tRNA(Ile)-dependent editing activities. One activity is designated as 'pretransfer' editing and involves the hydrolysis of activated Val-AMP. The other activity is designated 'posttransfer' editing and involves deacylation of mischarged Val-tRNA(Ile). This is Isoleucine--tRNA ligase from Bifidobacterium longum (strain NCC 2705).